A 196-amino-acid polypeptide reads, in one-letter code: UMP-CMP kinase (196 aa).

ATP is bound at residue 13-18 (GAGKGT). S33 is modified (phosphoserine). Residues 33–63 (SAGELLRDERKNPDSQYGELIEKYIKDGKIV) form an NMP region. R39 contributes to the a ribonucleoside 5'-phosphate binding site. Residues K43 and K55 each carry the N6-acetyllysine modification. A ribonucleoside 5'-phosphate-binding positions include 61–63 (KIV) and 93–96 (GFPR). N100 provides a ligand contact to CMP. The residue at position 106 (K106) is an N6-succinyllysine. The tract at residues 133-143 (ERGKSSGRSDD) is LID. R134 contributes to the ATP binding site. 2 residues coordinate a ribonucleoside 5'-phosphate: R140 and R151. K179 is a binding site for ATP. S180 bears the Phosphoserine mark.

The protein belongs to the adenylate kinase family. UMP-CMP kinase subfamily. Monomer. Mg(2+) serves as cofactor.

Its subcellular location is the nucleus. The protein localises to the cytoplasm. The catalysed reaction is CMP + ATP = CDP + ADP. It catalyses the reaction dCMP + ATP = dCDP + ADP. It carries out the reaction UMP + ATP = UDP + ADP. The enzyme catalyses a 2'-deoxyribonucleoside 5'-diphosphate + ATP = a 2'-deoxyribonucleoside 5'-triphosphate + ADP. The catalysed reaction is a ribonucleoside 5'-diphosphate + ATP = a ribonucleoside 5'-triphosphate + ADP. Its function is as follows. Catalyzes the phosphorylation of pyrimidine nucleoside monophosphates at the expense of ATP. Plays an important role in de novo pyrimidine nucleotide biosynthesis. Has preference for UMP and CMP as phosphate acceptors. Also displays broad nucleoside diphosphate kinase activity. The protein is UMP-CMP kinase of Sus scrofa (Pig).